The following is a 459-amino-acid chain: tRNA modification GTPase MnmE (459 aa).

(6S)-5-formyl-5,6,7,8-tetrahydrofolate is bound by residues Arg-21, Glu-84, and Lys-123. Residues 219–380 (GMLTVIVGQP…LEKEIKQRVY (162 aa)) form the TrmE-type G domain. Residue Asn-229 coordinates K(+). GTP is bound by residues 229–234 (NVGKSS), 248–254 (TDIPGTT), and 273–276 (DTAG). Residue Ser-233 coordinates Mg(2+). K(+)-binding residues include Thr-248, Ile-250, and Thr-253. Thr-254 serves as a coordination point for Mg(2+). Lys-459 contacts (6S)-5-formyl-5,6,7,8-tetrahydrofolate.

This sequence belongs to the TRAFAC class TrmE-Era-EngA-EngB-Septin-like GTPase superfamily. TrmE GTPase family. As to quaternary structure, homodimer. Heterotetramer of two MnmE and two MnmG subunits. Requires K(+) as cofactor.

It localises to the cytoplasm. In terms of biological role, exhibits a very high intrinsic GTPase hydrolysis rate. Involved in the addition of a carboxymethylaminomethyl (cmnm) group at the wobble position (U34) of certain tRNAs, forming tRNA-cmnm(5)s(2)U34. This Desulfitobacterium hafniense (strain Y51) protein is tRNA modification GTPase MnmE.